The following is a 103-amino-acid chain: UPF0298 protein LACR_0404 (103 aa).

This sequence belongs to the UPF0298 family.

It localises to the cytoplasm. This Lactococcus lactis subsp. cremoris (strain SK11) protein is UPF0298 protein LACR_0404.